The following is a 394-amino-acid chain: GTPase Obg (394 aa).

One can recognise an Obg domain in the interval Ser-4–Leu-162. Positions Ala-163–Asn-329 constitute an OBG-type G domain. GTP contacts are provided by residues Gly-169 to Ser-176, Phe-194 to Glu-198, Asp-216 to Gly-219, Thr-283 to Asp-286, and Ser-310 to Val-312. Mg(2+)-binding residues include Ser-176 and Thr-196. The segment at Lys-358–Lys-394 is disordered. Positions Gly-361–Lys-394 are enriched in acidic residues.

Belongs to the TRAFAC class OBG-HflX-like GTPase superfamily. OBG GTPase family. Monomer. Mg(2+) is required as a cofactor.

The protein localises to the cytoplasm. In terms of biological role, an essential GTPase which binds GTP, GDP and possibly (p)ppGpp with moderate affinity, with high nucleotide exchange rates and a fairly low GTP hydrolysis rate. Plays a role in control of the cell cycle, stress response, ribosome biogenesis and in those bacteria that undergo differentiation, in morphogenesis control. This chain is GTPase Obg, found in Phocaeicola vulgatus (strain ATCC 8482 / DSM 1447 / JCM 5826 / CCUG 4940 / NBRC 14291 / NCTC 11154) (Bacteroides vulgatus).